A 319-amino-acid chain; its full sequence is Annexin A4 (319 aa).

Position 2 is an N-acetylalanine (Ala2). Thr7 bears the Phosphothreonine; by PKC mark. Position 12 is a phosphoserine (Ser12). 4 Annexin repeats span residues 14-85 (FNAA…GMMT), 86-157 (PTVL…SLSA), 169-241 (ALVR…AIVK), and 245-316 (NKSA…ILCG). Residues Lys213, Lys293, and Lys300 each carry the N6-acetyllysine modification.

This sequence belongs to the annexin family. In terms of assembly, monomer.

Its subcellular location is the zymogen granule membrane. Its function is as follows. Calcium/phospholipid-binding protein which promotes membrane fusion and is involved in exocytosis. This is Annexin A4 (ANXA4) from Sus scrofa (Pig).